Here is a 375-residue protein sequence, read N- to C-terminus: Glutamate 5-kinase (375 aa).

Lys-13 is an ATP binding site. The substrate site is built by Ser-54, Asp-141, and Asn-153. ATP contacts are provided by residues 173–174 (TD) and 216–222 (TGGMATK). Residues 281 to 359 (TGKIFIDAGA…EAIAAVLGYV (79 aa)) enclose the PUA domain.

It belongs to the glutamate 5-kinase family.

It localises to the cytoplasm. The catalysed reaction is L-glutamate + ATP = L-glutamyl 5-phosphate + ADP. It functions in the pathway amino-acid biosynthesis; L-proline biosynthesis; L-glutamate 5-semialdehyde from L-glutamate: step 1/2. Its function is as follows. Catalyzes the transfer of a phosphate group to glutamate to form L-glutamate 5-phosphate. The chain is Glutamate 5-kinase from Synechocystis sp. (strain ATCC 27184 / PCC 6803 / Kazusa).